The following is a 230-amino-acid chain: Cytidylate kinase (230 aa).

17–25 (GPTASGKGT) lines the ATP pocket.

This sequence belongs to the cytidylate kinase family. Type 1 subfamily.

It localises to the cytoplasm. It catalyses the reaction CMP + ATP = CDP + ADP. It carries out the reaction dCMP + ATP = dCDP + ADP. The polypeptide is Cytidylate kinase (Ralstonia nicotianae (strain ATCC BAA-1114 / GMI1000) (Ralstonia solanacearum)).